Here is a 262-residue protein sequence, read N- to C-terminus: Virulence plasmid protein pGP6-D-related protein (262 aa).

It belongs to the UPF0137 (pGP6-D) family.

This Chlamydia muridarum (strain MoPn / Nigg) protein is Virulence plasmid protein pGP6-D-related protein.